The sequence spans 120 residues: MFLLYEYDIFWAFLIISSLIPILAFLISGILAPISKGPEKLSSYESGIEPIGDAWLQFRIRYYMFALIFVVFDVETVFLYPWAMSFDVLGVSVFLEAFLFVLILIVGSVYAWRKGALEWS.

The next 3 membrane-spanning stretches (helical) occupy residues 9–29 (IFWA…LISG), 64–84 (MFAL…PWAM), and 88–108 (VLGV…IVGS).

It belongs to the complex I subunit 3 family. As to quaternary structure, NDH is composed of at least 16 different subunits, 5 of which are encoded in the nucleus.

The protein resides in the plastid. It localises to the chloroplast thylakoid membrane. It carries out the reaction a plastoquinone + NADH + (n+1) H(+)(in) = a plastoquinol + NAD(+) + n H(+)(out). It catalyses the reaction a plastoquinone + NADPH + (n+1) H(+)(in) = a plastoquinol + NADP(+) + n H(+)(out). In terms of biological role, NDH shuttles electrons from NAD(P)H:plastoquinone, via FMN and iron-sulfur (Fe-S) centers, to quinones in the photosynthetic chain and possibly in a chloroplast respiratory chain. The immediate electron acceptor for the enzyme in this species is believed to be plastoquinone. Couples the redox reaction to proton translocation, and thus conserves the redox energy in a proton gradient. This is NAD(P)H-quinone oxidoreductase subunit 3, chloroplastic from Phaseolus vulgaris (Kidney bean).